A 62-amino-acid polypeptide reads, in one-letter code: Phycobilisome degradation protein NblA homolog 1 (62 aa).

The protein to Synechococcus PCC 7942 NblA and some, to chloroplast ycf18.

This Synechocystis sp. (strain ATCC 27184 / PCC 6803 / Kazusa) protein is Phycobilisome degradation protein NblA homolog 1.